A 42-amino-acid chain; its full sequence is Large ribosomal subunit protein bL36 (42 aa).

Belongs to the bacterial ribosomal protein bL36 family.

The sequence is that of Large ribosomal subunit protein bL36 from Anaplasma phagocytophilum (strain HZ).